An 85-amino-acid chain; its full sequence is COMM domain-containing protein 6 (85 aa).

An N-acetylmethionine modification is found at Met1. A COMM domain is found at 18-85 (QLVDFQWKLG…KEIAAVIETV (68 aa)).

Belongs to the COMM domain-containing protein 6 family. In terms of assembly, component of the commander complex consisting of the CCC subcomplex and the retriever subcomplex. Component of the CCC (COMMD/CCDC22/CCDC93) subcomplex consisting of COMMD1, COMMD2, COMMD3, COMMD4, COMMD5, COMMD6, COMMD7, COMMD8, COMMD9, COMMD10, CCDC22 and CCDC93; within the complex forms a heterodimer with COMMD1. May form a homodimer with isoform 1. Interacts with RELA, RELB, NFKB1/p105. Does not interact with NFKBIB. Interacts with CCDC22, CCDC93, SCNN1B, CUL4A. Ubiquitous. Expressed in brain, heart, skeletal muscle, lung, pancreas, liver, kidney, small intestine and placenta.

It localises to the nucleus. It is found in the cytoplasm. Functionally, scaffold protein in the commander complex that is essential for endosomal recycling of transmembrane cargos; the commander complex is composed of the CCC subcomplex and the retriever subcomplex. May modulate activity of cullin-RING E3 ubiquitin ligase (CRL) complexes. Down-regulates activation of NF-kappa-B. Inhibits TNF-induced NFKB1 activation. This is COMM domain-containing protein 6 (COMMD6) from Homo sapiens (Human).